We begin with the raw amino-acid sequence, 319 residues long: 2,3,4,5-tetrahydropyridine-2,6-dicarboxylate N-succinyltransferase (319 aa).

The Mg(2+) site is built by Asp-167 and Glu-184. Glu-200 acts as the Acyl-anhydride intermediate in catalysis. Residues Arg-202, Gly-217, Ser-220, Ala-243, 258–259 (EA), and Lys-278 each bind succinyl-CoA.

Belongs to the type 2 tetrahydrodipicolinate N-succinyltransferase family. Homotrimer.

It localises to the cytoplasm. The catalysed reaction is (S)-2,3,4,5-tetrahydrodipicolinate + succinyl-CoA + H2O = (S)-2-succinylamino-6-oxoheptanedioate + CoA. It functions in the pathway amino-acid biosynthesis; L-lysine biosynthesis via DAP pathway; LL-2,6-diaminopimelate from (S)-tetrahydrodipicolinate (succinylase route): step 1/3. Its function is as follows. Catalyzes the conversion of the cyclic tetrahydrodipicolinate (THDP) into the acyclic N-succinyl-L-2-amino-6-oxopimelate using succinyl-CoA. This Salinispora tropica (strain ATCC BAA-916 / DSM 44818 / JCM 13857 / NBRC 105044 / CNB-440) protein is 2,3,4,5-tetrahydropyridine-2,6-dicarboxylate N-succinyltransferase.